The following is a 250-amino-acid chain: Ubiquinone biosynthesis O-methyltransferase (250 aa).

S-adenosyl-L-methionine-binding residues include R41, G72, D93, and M136.

Belongs to the methyltransferase superfamily. UbiG/COQ3 family.

It catalyses the reaction a 3-demethylubiquinol + S-adenosyl-L-methionine = a ubiquinol + S-adenosyl-L-homocysteine + H(+). It carries out the reaction a 3-(all-trans-polyprenyl)benzene-1,2-diol + S-adenosyl-L-methionine = a 2-methoxy-6-(all-trans-polyprenyl)phenol + S-adenosyl-L-homocysteine + H(+). It participates in cofactor biosynthesis; ubiquinone biosynthesis. Functionally, O-methyltransferase that catalyzes the 2 O-methylation steps in the ubiquinone biosynthetic pathway. This is Ubiquinone biosynthesis O-methyltransferase from Agrobacterium fabrum (strain C58 / ATCC 33970) (Agrobacterium tumefaciens (strain C58)).